A 249-amino-acid chain; its full sequence is Capsid protein (249 aa).

The disordered stretch occupies residues 1–33 (MDTDGDNDVFGSGNDTRNNDDKKKEEMKQNISD). The segment covering 17–28 (RNNDDKKKEEMK) has biased composition (basic and acidic residues).

The protein belongs to the closteroviridae capsid protein family.

The protein resides in the virion. Functionally, capsid protein self-assembles to form filamentous capsids, about 650-850 nm in length. The chain is Capsid protein from Beta vulgaris (Sugar beet).